The primary structure comprises 391 residues: Oocyte zinc finger protein XlCOF7.2 (391 aa).

4 C2H2-type zinc fingers span residues 284–306, 312–334, 340–362, and 368–391; these read FPCS…YRTH, YPCS…RRIH, SSCS…HRTH, and YSCS…RRTH.

Belongs to the krueppel C2H2-type zinc-finger protein family.

Its subcellular location is the nucleus. May be involved in transcriptional regulation. This chain is Oocyte zinc finger protein XlCOF7.2, found in Xenopus laevis (African clawed frog).